Here is a 753-residue protein sequence, read N- to C-terminus: MYKSQYISGHREKFVRLDDTDSRVSMSSNATGMKKRSCFGLFNVTSRGGGKTKNTSKSFREGVKIGSEGLKTIGKSFTSGVTRAVFPEDLRVSEKKIFDPQDKTLLLWNRMFVISCILAVSVDPLFFYLPIVDNSKNCIGIDSKLAVTTTTLRTIIDVFYLTRMALQFRTAYIAPSSRVFGRGELVIDPAKIAERYLTRYFIVDFLAVLPLPQIAVWKFLHGSKGTDVLPTKQALLHIVITQYIPRFVRFIPLTSELKKTAGAFAEGAWAGAAYYLLWYMLASHITGAFWYMLSVERNDTCLRSACKVQPDPKVCVQILYCGSKLMSSRETDWIKSVPDLFKNNCSAKSDESKFNYGIYSQAVSSGIVSSTTFFSKFCYCLWWGLQNLSTLGQGLQTSTYPGEVLFSIAIAVAGLLLFALLIGNMQTYLQSLTVRLEEMRIKRRDSEQWMHHRSLPQNLRERVRRYDQYKWLETRGVDEENIVQSLPKDLRRDIKRHLCLNLVRRVPLFANMDERLLDAICERLKPSLYTESTYIVREGDPVNEMLFIIRGRLESVTTDGGRSGFFNRGLLKEGDFCGEELLTWALDPKAGSNLPSSTRTVKALTEVEAFALEAEELKFVASQFRRLHSRQVQQTFRFYSQQWRTWAACFIQAAWRRHLRRKIAELRRKEEEEEEMDYEDDEYYDDNMGGMVTRSDSSVGSSSTLRSTVFASRFAANALKGHKLRVTESSKSLMNLTKPSEPDFEALDTDDLN.

At 1 to 111 (MYKSQYISGH…DKTLLLWNRM (111 aa)) the chain is on the cytoplasmic side. Residues 112–132 (FVISCILAVSVDPLFFYLPIV) form a helical membrane-spanning segment. Over 133-145 (DNSKNCIGIDSKL) the chain is Extracellular. The chain crosses the membrane as a helical span at residues 146-166 (AVTTTTLRTIIDVFYLTRMAL). Over 167-199 (QFRTAYIAPSSRVFGRGELVIDPAKIAERYLTR) the chain is Cytoplasmic. A helical membrane pass occupies residues 200-220 (YFIVDFLAVLPLPQIAVWKFL). Topologically, residues 221–233 (HGSKGTDVLPTKQ) are extracellular. Residues 234–254 (ALLHIVITQYIPRFVRFIPLT) traverse the membrane as a helical segment. Residues 255–274 (SELKKTAGAFAEGAWAGAAY) are Cytoplasmic-facing. The helical transmembrane segment at 275–295 (YLLWYMLASHITGAFWYMLSV) threads the bilayer. Over 296-402 (ERNDTCLRSA…QGLQTSTYPG (107 aa)) the chain is Extracellular. Residues 403–423 (EVLFSIAIAVAGLLLFALLIG) form a helical membrane-spanning segment. Topologically, residues 424–753 (NMQTYLQSLT…FEALDTDDLN (330 aa)) are cytoplasmic. A nucleoside 3',5'-cyclic phosphate contacts are provided by residues 508–638 (LFAN…TFRF) and glutamate 579. The segment at 624 to 639 (FRRLHSRQVQQTFRFY) is calmodulin-binding. Residues 644–673 (RTWAACFIQAAWRRHLRRKIAELRRKEEEE) form the IQ domain. Residues 731–753 (KSLMNLTKPSEPDFEALDTDDLN) are disordered. Acidic residues predominate over residues 742–753 (PDFEALDTDDLN).

Belongs to the cyclic nucleotide-gated cation channel (TC 1.A.1.5) family. As to quaternary structure, homotetramer or heterotetramer.

The protein localises to the cell membrane. Its function is as follows. Putative cyclic nucleotide-gated ion channel. This Arabidopsis thaliana (Mouse-ear cress) protein is Putative cyclic nucleotide-gated ion channel 8 (CNGC8).